We begin with the raw amino-acid sequence, 227 residues long: Probable septum site-determining protein MinC (227 aa).

This sequence belongs to the MinC family. Interacts with MinD and FtsZ.

Its function is as follows. Cell division inhibitor that blocks the formation of polar Z ring septums. Rapidly oscillates between the poles of the cell to destabilize FtsZ filaments that have formed before they mature into polar Z rings. Prevents FtsZ polymerization. This is Probable septum site-determining protein MinC from Photorhabdus laumondii subsp. laumondii (strain DSM 15139 / CIP 105565 / TT01) (Photorhabdus luminescens subsp. laumondii).